Here is a 444-residue protein sequence, read N- to C-terminus: Inward rectifier potassium channel 4 (444 aa).

Residues 1–55 (MHGHNRNGQAHVPRRKRRNRFVKKNGQCNVYFANLSNKSQRYMADIFTTCVDTRW) lie on the Cytoplasmic side of the membrane. Residues 56 to 80 (RYMLMLFSAAFLVSWLFFGLLFWCI) form a helical membrane-spanning segment. Residues 81 to 119 (AFFHGDLEASPSVPAAGAPGGNGGAAPAAPKPCIMHVNG) are Extracellular-facing. Positions 120 to 131 (FLGAFLFSVETQ) form an intramembrane region, helical; Pore-forming. The segment at residues 132–138 (TTIGYGF) is an intramembrane region (pore-forming). Positions 133-138 (TIGYGF) match the Selectivity filter motif. The Extracellular portion of the chain corresponds to 139–147 (RCVTEECPL). The helical transmembrane segment at 148–169 (AVIAVVVQSIVGCVIDSFMIGT) threads the bilayer. Residues 170-444 (IMAKMARPKK…NISYRRESAI (275 aa)) lie on the Cytoplasmic side of the membrane. The short motif at 442 to 444 (SAI) is the PDZ-binding element.

It belongs to the inward rectifier-type potassium channel (TC 1.A.2.1) family. KCNJ4 subfamily. In terms of assembly, homomultimeric and heteromultimeric association with KCNJ2 and KCNJ12. Interacts with DLG2 and DLG4. Associates, via its PDZ-recognition domain, with a complex containing LIN7A, LIN7B, LIN7C, DLG1, CASK and APBA1. Interacts with TAX1BP3. TAX1BP3 competes with LIN7 family members for KCNJ4 binding.

It localises to the cell membrane. Its subcellular location is the postsynaptic cell membrane. It is found in the cytoplasmic vesicle membrane. It carries out the reaction K(+)(in) = K(+)(out). In terms of biological role, inward rectifier potassium channels are characterized by a greater tendency to allow potassium to flow into the cell rather than out of it. Their voltage dependence is regulated by the concentration of extracellular potassium; as external potassium is raised, the voltage range of the channel opening shifts to more positive voltages. The inward rectification is mainly due to the blockage of outward current by internal magnesium. Can be blocked by extracellular barium and cesium. This Mesocricetus auratus (Golden hamster) protein is Inward rectifier potassium channel 4 (KCNJ4).